Reading from the N-terminus, the 1367-residue chain is Dynactin, 150 kDa isoform (1367 aa).

The CAP-Gly domain occupies 28 to 70 (GETAFAPGTWVGIELDEPSGKNDGSVQGERYFNCEMGYGMFVR). Positions 76 to 318 (VIAQPPPPPP…NLKATTITPR (243 aa)) are disordered. Low complexity-rich tracts occupy residues 88–99 (TFRRSVTTRPTS) and 132–149 (PSRT…RSPT). A compositionally biased stretch (polar residues) spans 150–163 (KQLATASSSGNPSR). Low complexity-rich tracts occupy residues 164–190 (SGTP…SRHS) and 243–259 (STGS…KRGS). Coiled coils occupy residues 321–598 (ITNT…MQEE), 637–698 (LQSD…EAEQ), and 1039–1199 (AELK…RARL).

The protein belongs to the dynactin 150 kDa subunit family. In terms of assembly, large macromolecular complex of at least 10 components; p150(glued) binds directly to microtubules and to cytoplasmic dynein.

Its subcellular location is the cytoplasm. The protein localises to the cytoskeleton. Its function is as follows. Required for the cytoplasmic dynein-driven retrograde movement of vesicles and organelles along microtubules. Dynein-dynactin interaction is a key component of the mechanism of axonal transport of vesicles and organelles. The chain is Dynactin, 150 kDa isoform (ro-3) from Neurospora crassa (strain ATCC 24698 / 74-OR23-1A / CBS 708.71 / DSM 1257 / FGSC 987).